Here is a 668-residue protein sequence, read N- to C-terminus: MVKGKILFGDVFSALRCLEDNSISVALTSPPYWRQRDYGFKGQIGREKTPEEYIGRLIVIFRELRAKLKDDGVFFLNIGDKYKNRYGKSHLLQIPYRLAAHMIKDGWKLLDIIIWYKPNHMPSSVKDRFTNTYEPVLVFGKSDENIYTKKHPVLKIPLQQTKWKHTAVFPEKLVSSLLSRCNLKDGDYILDPFAGTGTTGAVVKKMKYQLYPKDLNVILIEKGKKFLDIITERTGIKEIKELKSSEYTWEPVNDKLAFSEDKPLIIIEDTHGETFIAKNSEEFSRIIMGMLSEEFQDFHREDAVYFFGVKNWKLSDLVLPGLLIDHGFILRNMIIIEDGSSWYPVFMLVKDTTRVNYKFYIDRIRKKPKTVLPEKWNQEDFIGLIVNDNLSKKPRKGEVVDIISTYSQDNFPKIVAVSWEDDNISLELCLNPRKDEFIMESLQFTCPHCGTQLIDTYDPLGDNICYNCQKEIYGKNSLPILKESKEIIESLESVENGEYQVGENIKPQYQKRCKESKSKFAGMERMNWGASPGARKTIIGDSFSKMRLYRLDQPTIARYLNIYMKKNDLRIKDITQALPPEYKHTVGHWFRKDFGGSIPLPEDVTLLEEILKLDKEFARILKRSVLKLQTVKHSLKGKNPGDFLELEENKLKEYLTKTYMPPSYYIKK.

Belongs to the N(4)/N(6)-methyltransferase family. N(4) subfamily.

The enzyme catalyses a 2'-deoxycytidine in DNA + S-adenosyl-L-methionine = an N(4)-methyl-2'-deoxycytidine in DNA + S-adenosyl-L-homocysteine + H(+). Functionally, a beta subtype methylase, recognizes the double-stranded DNA sequence 5'-GCNNNNNNNGC-3', methylates C-2 on both strands, and protects the DNA from cleavage by the MwoI endonuclease. In Methanothermobacter wolfeii (Methanobacterium wolfei), this protein is Type II methyltransferase M.MwoI.